The sequence spans 1328 residues: Tubulin polyglutamylase TTLL5 (1328 aa).

Residues M1–A22 are disordered. A TTL domain is found at R62–S407. Residues K180, R186–G187, S208–I211, and K221–D223 each bind ATP. R186 contacts a protein. Residue R247 coordinates L-glutamate. T268–N269 serves as a coordination point for ATP. Y270, S271, and K293 together coordinate L-glutamate. D353, E366, and N368 together coordinate Mg(2+). The c-MTBD region stretch occupies residues P378–T488. K384 provides a ligand contact to L-glutamate. Disordered regions lie at residues I411–D436, A585–Y631, H834–H853, P948–L975, S1006–D1032, R1085–G1129, and R1212–G1271. Residues R420–L432 show a composition bias toward polar residues. Acidic residues predominate over residues E597–Q617. Residues S838–S847 show a composition bias toward low complexity. 4 stretches are compositionally biased toward polar residues: residues T1116–T1128, S1214–P1227, P1234–K1248, and Q1257–G1271.

It belongs to the tubulin--tyrosine ligase family. Interacts with the transcriptional coactivators NCOA1/SRC-1 and NCOA2/TIF2. Mg(2+) is required as a cofactor. Highly expressed in brain, kidney, liver, spleen and testis. Expressed in heart, lung, muscle and trachea.

The protein localises to the cell projection. It is found in the cilium. It localises to the cytoplasm. The protein resides in the cytoskeleton. Its subcellular location is the cilium basal body. The protein localises to the nucleus. It catalyses the reaction L-glutamyl-[protein] + L-glutamate + ATP = gamma-L-glutamyl-L-glutamyl-[protein] + ADP + phosphate + H(+). The enzyme catalyses (L-glutamyl)(n)-gamma-L-glutamyl-L-glutamyl-[protein] + L-glutamate + ATP = (L-glutamyl)(n+1)-gamma-L-glutamyl-L-glutamyl-[protein] + ADP + phosphate + H(+). Functionally, polyglutamylase which modifies tubulin, generating polyglutamate side chains on the gamma-carboxyl group of specific glutamate residues within the C-terminal tail of tubulin. Preferentially mediates ATP-dependent initiation step of the polyglutamylation reaction over the elongation step. Preferentially modifies the alpha-tubulin tail over a beta-tail. Required for CCSAP localization to both polyglutamylated spindle and cilia microtubules. Increases the effects of transcriptional coactivator NCOA2/TIF2 in glucocorticoid receptor-mediated repression and induction and in androgen receptor-mediated induction. The sequence is that of Tubulin polyglutamylase TTLL5 from Mus musculus (Mouse).